We begin with the raw amino-acid sequence, 317 residues long: Glucose-6-phosphate isomerase, cytosolic 2B (317 aa).

The Proton donor role is filled by Glu-108. Residues His-139 and Lys-264 contribute to the active site.

Belongs to the GPI family. In terms of assembly, homodimer.

Its subcellular location is the cytoplasm. It catalyses the reaction alpha-D-glucose 6-phosphate = beta-D-fructose 6-phosphate. Its pathway is carbohydrate degradation; glycolysis; D-glyceraldehyde 3-phosphate and glycerone phosphate from D-glucose: step 2/4. This Clarkia lewisii (Farewell-to-spring) protein is Glucose-6-phosphate isomerase, cytosolic 2B (PGIC2-B).